Consider the following 658-residue polypeptide: Carnitine O-palmitoyltransferase 2, mitochondrial (658 aa).

The transit peptide at 1 to 26 (MARLLTSSSALRWGAVSSSQSVGRAY) directs the protein to the mitochondrion. At 27–179 (SSGSPDTEYV…GYLEPEIFHL (153 aa)) the chain is on the mitochondrial matrix side. The note=Mitochondrial inner membrane intramembrane region spans 180–209 (NPAKSDTLTFRKLIRFVPSSLSWYGAYMVN). The Mitochondrial matrix segment spans residues 210–658 (AYPLDMSQYF…FTVLQDKPIK (449 aa)). H373 serves as the catalytic Proton acceptor. 453–465 (GKELLKTQKLSPD) contacts CoA. 3 residues coordinate (R)-carnitine: Y487, S489, and T500.

It belongs to the carnitine/choline acetyltransferase family.

It localises to the mitochondrion inner membrane. It carries out the reaction (R)-carnitine + hexadecanoyl-CoA = O-hexadecanoyl-(R)-carnitine + CoA. The catalysed reaction is octanoyl-CoA + (R)-carnitine = O-octanoyl-(R)-carnitine + CoA. It catalyses the reaction decanoyl-CoA + (R)-carnitine = O-decanoyl-(R)-carnitine + CoA. The enzyme catalyses dodecanoyl-CoA + (R)-carnitine = O-dodecanoyl-R-carnitine + CoA. It carries out the reaction tetradecanoyl-CoA + (R)-carnitine = O-tetradecanoyl-(R)-carnitine + CoA. The catalysed reaction is (R)-carnitine + octadecanoyl-CoA = O-octadecanoyl-(R)-carnitine + CoA. It catalyses the reaction eicosanoyl-CoA + (R)-carnitine = O-eicosanoyl-(R)-carnitine + CoA. The enzyme catalyses (9Z)-tetradecenoyl-CoA + (R)-carnitine = O-(9Z)-tetradecenoyl-(R)-carnitine + CoA. It carries out the reaction (5Z)-tetradecenoyl-CoA + (R)-carnitine = O-(5Z)-tetradecenoyl-(R)-carnitine + CoA. The catalysed reaction is (R)-carnitine + (9Z)-octadecenoyl-CoA = O-(9Z)-octadecenoyl-(R)-carnitine + CoA. It catalyses the reaction 4,8-dimethylnonanoyl-CoA + (R)-carnitine = O-4,8-dimethylnonanoyl-(R)-carnitine + CoA. Its pathway is lipid metabolism; fatty acid beta-oxidation. In terms of biological role, involved in the intramitochondrial synthesis of acylcarnitines from accumulated acyl-CoA metabolites. Reconverts acylcarnitines back into the respective acyl-CoA esters that can then undergo beta-oxidation, an essential step for the mitochondrial uptake of long-chain fatty acids and their subsequent beta-oxidation in the mitochondrion. Active with medium (C8-C12) and long-chain (C14-C18) acyl-CoA esters. This chain is Carnitine O-palmitoyltransferase 2, mitochondrial (cpt2), found in Xenopus tropicalis (Western clawed frog).